Consider the following 514-residue polypeptide: Putative fucosyltransferase 10 (514 aa).

N-linked (GlcNAc...) asparagine glycans are attached at residues Asn-185, Asn-210, Asn-355, Asn-377, and Asn-456.

This sequence belongs to the glycosyltransferase 37 family. As to expression, expressed in root, leaves, stems and seedlings.

Its subcellular location is the golgi apparatus. The protein operates within protein modification; protein glycosylation. In terms of biological role, may be involved in cell wall biosynthesis. May act as a fucosyltransferase. The sequence is that of Putative fucosyltransferase 10 (FUT10) from Arabidopsis thaliana (Mouse-ear cress).